Reading from the N-terminus, the 438-residue chain is Histidinol dehydrogenase (438 aa).

Positions 138, 199, and 222 each coordinate NAD(+). Substrate is bound by residues Ser-245, Gln-267, and His-270. 2 residues coordinate Zn(2+): Gln-267 and His-270. Residues Glu-335 and His-336 each act as proton acceptor in the active site. Residues His-336, Asp-369, Glu-423, and His-428 each coordinate substrate. Asp-369 contacts Zn(2+). His-428 lines the Zn(2+) pocket.

The protein belongs to the histidinol dehydrogenase family. Requires Zn(2+) as cofactor.

The enzyme catalyses L-histidinol + 2 NAD(+) + H2O = L-histidine + 2 NADH + 3 H(+). It participates in amino-acid biosynthesis; L-histidine biosynthesis; L-histidine from 5-phospho-alpha-D-ribose 1-diphosphate: step 9/9. Functionally, catalyzes the sequential NAD-dependent oxidations of L-histidinol to L-histidinaldehyde and then to L-histidine. The protein is Histidinol dehydrogenase of Burkholderia lata (strain ATCC 17760 / DSM 23089 / LMG 22485 / NCIMB 9086 / R18194 / 383).